A 402-amino-acid chain; its full sequence is Nodal homolog 4-A (402 aa).

A signal peptide spans 1–18; that stretch reads MHLYFYCLILLFVPGGNS. The propeptide occupies 19-278; sequence LGINSYLKHM…TIAHTRRHRR (260 aa). N-linked (GlcNAc...) asparagine glycans are attached at residues asparagine 37, asparagine 238, and asparagine 340. Cystine bridges form between cysteine 302–cysteine 368, cysteine 331–cysteine 399, and cysteine 335–cysteine 401.

The protein belongs to the TGF-beta family. In terms of assembly, homodimer; disulfide-linked. In terms of tissue distribution, during blastula stages, expressed in the endoderm at a higher level dorsally than ventrally. Expressed in the deep cells of the Spemann organizer at the gastrula stage. Expressed in the notochord (a derivative of the organizer) and neural tube during the neural stages.

It is found in the secreted. Functionally, cooperation and regulatory loops of multiple nodals are essential for mesendoderm patterning in early embryos. Plays a role in mesoderm formation and may be required for neural development. In Xenopus laevis (African clawed frog), this protein is Nodal homolog 4-A (nodal4-a).